Reading from the N-terminus, the 315-residue chain is Protein TIFY 4B (315 aa).

The segment at 113-145 (CHRRDSPRSAEFSGSSGQFVADKDSHKTVSVSP) is disordered. The Tify domain maps to 151 to 186 (TNAVVGQMTIFYSGKVNVYDGVPPEKARSIMHFAAN). A Jas motif is present at residues 233-260 (QANRKVSLQRYLEKRKDRRFSKTKKAPG). The Nuclear localization signal motif lies at 235–242 (NRKVSLQR). A compositionally biased stretch (basic residues) spans 248–257 (KDRRFSKTKK). The segment at 248 to 315 (KDRRFSKTKK…LNSDLNSEDN (68 aa)) is disordered. The segment covering 293 to 315 (PENQTKSPNISVDLNSDLNSEDN) has biased composition (polar residues).

It belongs to the TIFY/JAZ family. As to quaternary structure, interacts with AFPH2/NINJA.

It localises to the nucleus. Its function is as follows. Regulates the arrest of dispersed meristematic cells during lamina development. This chain is Protein TIFY 4B (TIFY4B), found in Arabidopsis thaliana (Mouse-ear cress).